Here is a 284-residue protein sequence, read N- to C-terminus: MIQTITDLSALRALVTGWKREGLRVALVPTMGNLHAGHYSLVMLARQYADRVVSSVFVNPTQFGPNEDFARYPRTPEADMRGLEDAGCDALWLPDVDTMYPLGTALATPIHAPGVSDVLEGVCRPGHFDGVCTVVARLFNQVQPDVAAFGKKDYQQLAVIRQMVADLAFPIEILGGSIVREADGLAMSSRNQYLSADDRPISAQIRKVLLQMRDSHAAGVPRLQVEAAATQALEAVGFRVDYTALRLPDLSEPDDGASNPAAGPRVALIAARIGSTRLIDNLEF.

Residue 31–38 participates in ATP binding; that stretch reads MGNLHAGH. H38 functions as the Proton donor in the catalytic mechanism. A (R)-pantoate-binding site is contributed by Q62. Q62 contributes to the beta-alanine binding site. 150-153 provides a ligand contact to ATP; that stretch reads GKKD. (R)-pantoate is bound at residue Q156. ATP-binding positions include V179 and 187–190; that span reads MSSR.

This sequence belongs to the pantothenate synthetase family. Homodimer.

Its subcellular location is the cytoplasm. The enzyme catalyses (R)-pantoate + beta-alanine + ATP = (R)-pantothenate + AMP + diphosphate + H(+). It functions in the pathway cofactor biosynthesis; (R)-pantothenate biosynthesis; (R)-pantothenate from (R)-pantoate and beta-alanine: step 1/1. Functionally, catalyzes the condensation of pantoate with beta-alanine in an ATP-dependent reaction via a pantoyl-adenylate intermediate. The polypeptide is Pantothenate synthetase (Xanthomonas campestris pv. campestris (strain 8004)).